The sequence spans 553 residues: Methyl-coenzyme M reductase I subunit alpha (553 aa).

Gln-150 is a binding site for coenzyme F430. Coenzyme B is bound by residues Arg-228, 259–260, and Arg-273; that span reads KH. Arg-274 bears the 5-methylarginine mark. Tyr-335 and Tyr-447 together coordinate coenzyme M.

Belongs to the methyl-coenzyme M reductase alpha subunit family. As to quaternary structure, MCR is a hexamer of two alpha, two beta, and two gamma chains, forming a dimer of heterotrimers. It depends on coenzyme F430 as a cofactor. Is methylated on C5 of Arg-274 by the methyltransferase MJ0841. This post-translational methylation, despite being not essential in vivo, plays a role for the stability and structural integrity of MCR.

The protein resides in the cytoplasm. The enzyme catalyses coenzyme B + methyl-coenzyme M = methane + coenzyme M-coenzyme B heterodisulfide. It functions in the pathway one-carbon metabolism; methyl-coenzyme M reduction; methane from methyl-coenzyme M: step 1/1. Functionally, component of the methyl-coenzyme M reductase (MCR) I that catalyzes the reductive cleavage of methyl-coenzyme M (CoM-S-CH3 or 2-(methylthio)ethanesulfonate) using coenzyme B (CoB or 7-mercaptoheptanoylthreonine phosphate) as reductant which results in the production of methane and the mixed heterodisulfide of CoB and CoM (CoM-S-S-CoB). This is the final step in methanogenesis. The polypeptide is Methyl-coenzyme M reductase I subunit alpha (mcrA) (Methanocaldococcus jannaschii (strain ATCC 43067 / DSM 2661 / JAL-1 / JCM 10045 / NBRC 100440) (Methanococcus jannaschii)).